The sequence spans 219 residues: Ribose-5-phosphate isomerase A (219 aa).

Substrate contacts are provided by residues 28 to 31 (SGST), 81 to 84 (DGAD), and 94 to 97 (KGGG). The active-site Proton acceptor is the Glu103. Lys121 lines the substrate pocket.

The protein belongs to the ribose 5-phosphate isomerase family. Homodimer.

It catalyses the reaction aldehydo-D-ribose 5-phosphate = D-ribulose 5-phosphate. It functions in the pathway carbohydrate degradation; pentose phosphate pathway; D-ribose 5-phosphate from D-ribulose 5-phosphate (non-oxidative stage): step 1/1. In terms of biological role, catalyzes the reversible conversion of ribose-5-phosphate to ribulose 5-phosphate. The chain is Ribose-5-phosphate isomerase A from Haemophilus influenzae (strain PittGG).